The sequence spans 395 residues: MAVEFKKIEGDSIQYFALVIILAAVTALGFYAYVLDHKMGLNGLSNRVPWGIVNAGIPYFIGLSAGSLIVSALAGVFNIKKYKVFSRIAAYMAAAWIIAAILSIALDIGKLYHFMNAVRYFNPTSIFSWNAFLYSSYFVICSIYLLVQFEEMEKATRFMAGLAVFWAVLVHSGTGAIYSFVYSKELYHSALTPPMFIVCAITSGLGLLLANLYFTFRFTKRELDPKLIRGLALIFAGLMMVLGYFLAVEGLEKGYIPALHEAVQFVFLTPTSGVFWSFWLLVIFGIAIPIIIVLNPKTGYDLRWITFAGILHAALVFAERFYLIIPGQVFPEEYLPGYELESLHTLEGYIVSYTPSVFEWLQVIGLIAMVYLIFVVGVKLFALIPERAVEEVVEE.

10 helical membrane-spanning segments follow: residues 15-35 (YFALVIILAAVTALGFYAYVL), 57-77 (IPYFIGLSAGSLIVSALAGVF), 88-108 (IAAYMAAAWIIAAILSIALDI), 126-146 (IFSWNAFLYSSYFVICSIYLL), 158-178 (FMAGLAVFWAVLVHSGTGAIY), 196-216 (FIVCAITSGLGLLLANLYFTF), 231-251 (LALIFAGLMMVLGYFLAVEGL), 274-294 (VFWSFWLLVIFGIAIPIIIVL), 305-325 (ITFAGILHAALVFAERFYLII), and 364-384 (IGLIAMVYLIFVVGVKLFALI).

Belongs to the NrfD family. As to quaternary structure, consists of five subunits: an integral membrane subunit, a cytochrome b-like subunit, a cytochrome c subunit and two iron-sulfur subunits.

It is found in the cell membrane. In terms of biological role, has menaquinol-oxidizing activity. HmeB subunit may function as a menaquinol-oxidizing site. HmeA, HmeB and HmeE subunits may together catalyze electron transfer from menaquinol to cytochrome c. The protein is Hdr-like menaquinol oxidoreductase integral membrane subunit (hmeB) of Archaeoglobus fulgidus (strain ATCC 49558 / DSM 4304 / JCM 9628 / NBRC 100126 / VC-16).